Here is a 548-residue protein sequence, read N- to C-terminus: Probable malate:quinone oxidoreductase (548 aa).

The interval 520–548 (YDRPQAADSTPKPQLKPQPVQKEVADIAL) is disordered. Positions 530-541 (PKPQLKPQPVQK) are enriched in low complexity.

This sequence belongs to the MQO family. The cofactor is FAD.

The enzyme catalyses (S)-malate + a quinone = a quinol + oxaloacetate. Its pathway is carbohydrate metabolism; tricarboxylic acid cycle; oxaloacetate from (S)-malate (quinone route): step 1/1. The protein is Probable malate:quinone oxidoreductase of Shigella dysenteriae serotype 1 (strain Sd197).